We begin with the raw amino-acid sequence, 232 residues long: Putative uridine kinase DAS2 (232 aa).

ATP is bound at residue 17–24 (GGHATGVG).

It belongs to the uridine kinase family.

The protein resides in the cytoplasm. It localises to the nucleus. It catalyses the reaction uridine + ATP = UMP + ADP + H(+). The enzyme catalyses cytidine + ATP = CMP + ADP + H(+). It participates in pyrimidine metabolism; CTP biosynthesis via salvage pathway; CTP from cytidine: step 1/3. It functions in the pathway pyrimidine metabolism; UMP biosynthesis via salvage pathway; UMP from uridine: step 1/1. Functionally, putative uridine kinase identified in a screen for mutants with increased levels of rDNA transcription. This is Putative uridine kinase DAS2 (DAS2) from Saccharomyces cerevisiae (strain ATCC 204508 / S288c) (Baker's yeast).